The sequence spans 250 residues: Troponin I 1 (250 aa).

Disordered stretches follow at residues 1–59 (MSQI…ERKK) and 194–250 (SVFT…ADEE). Basic and acidic residues-rich tracts occupy residues 21-45 (DAQR…EAGQ) and 206-221 (DKPE…KEES). Over residues 229-250 (PVEEEETAASEGEEEEEEADEE) the composition is skewed to acidic residues.

Belongs to the troponin I family. Strongly expressed in body wall muscle during embryogenesis, reduces during the larval stages to adult. In late-stage larvae and adults, expression is evident in the proximal gonad of both hermaphrodites and males.

Troponin I is the inhibitory subunit of troponin, the thin filament regulatory complex which confers calcium-sensitivity to muscle actomyosin ATPase activity. The sequence is that of Troponin I 1 (tni-1) from Caenorhabditis elegans.